The sequence spans 424 residues: UPF0229 protein YPTS_2141 (424 aa).

Residues 84–109 (TNDRVDRPQGGGGGGSGQGNAGKDGE) form a disordered region. The span at 92-105 (QGGGGGGSGQGNAG) shows a compositional bias: gly residues.

It belongs to the UPF0229 family.

This Yersinia pseudotuberculosis serotype IB (strain PB1/+) protein is UPF0229 protein YPTS_2141.